The chain runs to 204 residues: Holliday junction resolvase RecU (204 aa).

Mg(2+) is bound by residues Thr89, Asp91, Asp104, and Gln123.

This sequence belongs to the RecU family. Mg(2+) serves as cofactor.

It localises to the cytoplasm. It carries out the reaction Endonucleolytic cleavage at a junction such as a reciprocal single-stranded crossover between two homologous DNA duplexes (Holliday junction).. Endonuclease that resolves Holliday junction intermediates in genetic recombination. Cleaves mobile four-strand junctions by introducing symmetrical nicks in paired strands. Promotes annealing of linear ssDNA with homologous dsDNA. Required for DNA repair, homologous recombination and chromosome segregation. This is Holliday junction resolvase RecU from Leuconostoc mesenteroides subsp. mesenteroides (strain ATCC 8293 / DSM 20343 / BCRC 11652 / CCM 1803 / JCM 6124 / NCDO 523 / NBRC 100496 / NCIMB 8023 / NCTC 12954 / NRRL B-1118 / 37Y).